A 128-amino-acid chain; its full sequence is Glycine cleavage system H protein (128 aa).

The Lipoyl-binding domain occupies 22 to 104; sequence TALVGVTDYA…YASGWLVKIK (83 aa). At lysine 63 the chain carries N6-lipoyllysine.

This sequence belongs to the GcvH family. In terms of assembly, the glycine cleavage system is composed of four proteins: P, T, L and H. The cofactor is (R)-lipoate.

The glycine cleavage system catalyzes the degradation of glycine. The H protein shuttles the methylamine group of glycine from the P protein to the T protein. The polypeptide is Glycine cleavage system H protein (Halothermothrix orenii (strain H 168 / OCM 544 / DSM 9562)).